Reading from the N-terminus, the 480-residue chain is Cobyric acid synthase (480 aa).

Residues 246-434 form the GATase cobBQ-type domain; the sequence is KILIAVPILP…VHGLFSELAQ (189 aa). The Nucleophile role is filled by Cys328. His426 is a catalytic residue.

This sequence belongs to the CobB/CobQ family. CobQ subfamily.

Its pathway is cofactor biosynthesis; adenosylcobalamin biosynthesis. Catalyzes amidations at positions B, D, E, and G on adenosylcobyrinic A,C-diamide. NH(2) groups are provided by glutamine, and one molecule of ATP is hydrogenolyzed for each amidation. The sequence is that of Cobyric acid synthase from Methylocella silvestris (strain DSM 15510 / CIP 108128 / LMG 27833 / NCIMB 13906 / BL2).